The sequence spans 405 residues: Deoxyguanosinetriphosphate triphosphohydrolase-like protein (405 aa).

Residues 75 to 219 (RLTHTIEVAQ…AAIADDIAYN (145 aa)) form the HD domain.

It belongs to the dGTPase family. Type 2 subfamily.

This Rhizobium etli (strain CIAT 652) protein is Deoxyguanosinetriphosphate triphosphohydrolase-like protein.